The sequence spans 327 residues: L-serine dehydratase/L-threonine deaminase (327 aa).

The residue at position 41 (Lys41) is an N6-(pyridoxal phosphate)lysine.

It belongs to the serine/threonine dehydratase family. Homodimer. Pyridoxal 5'-phosphate serves as cofactor.

The protein localises to the cytoplasm. The catalysed reaction is L-serine = pyruvate + NH4(+). It catalyses the reaction L-threonine = 2-oxobutanoate + NH4(+). It functions in the pathway carbohydrate biosynthesis; gluconeogenesis. Functionally, catalyzes the pyridoxal-phosphate-dependent dehydrative deamination of L-threonine and L-serine to ammonia and alpha-ketobutyrate and pyruvate, respectively. In Bos taurus (Bovine), this protein is L-serine dehydratase/L-threonine deaminase (SDS).